The following is a 622-amino-acid chain: Threonine--tRNA ligase (622 aa).

An editing domain region spans residues 1-141; it reads MKTLLIHSDY…SRKITTERKE (141 aa). The segment at 199–498 is catalytic; that stretch reads PHVKYIKEKE…TLENKPPALP (300 aa). The Zn(2+) site is built by Cys291, His343, and His467.

The protein belongs to the class-II aminoacyl-tRNA synthetase family. As to quaternary structure, homodimer. Zn(2+) serves as cofactor.

Its subcellular location is the cytoplasm. The enzyme catalyses tRNA(Thr) + L-threonine + ATP = L-threonyl-tRNA(Thr) + AMP + diphosphate + H(+). Catalyzes the attachment of threonine to tRNA(Thr) in a two-step reaction: L-threonine is first activated by ATP to form Thr-AMP and then transferred to the acceptor end of tRNA(Thr). Also edits incorrectly charged L-seryl-tRNA(Thr). This Methanococcus maripaludis (strain C7 / ATCC BAA-1331) protein is Threonine--tRNA ligase.